A 253-amino-acid chain; its full sequence is 5'/3'-nucleotidase SurE (253 aa).

Positions 8, 9, 39, and 92 each coordinate a divalent metal cation.

Belongs to the SurE nucleotidase family. The cofactor is a divalent metal cation.

It is found in the cytoplasm. It catalyses the reaction a ribonucleoside 5'-phosphate + H2O = a ribonucleoside + phosphate. It carries out the reaction a ribonucleoside 3'-phosphate + H2O = a ribonucleoside + phosphate. The catalysed reaction is [phosphate](n) + H2O = [phosphate](n-1) + phosphate + H(+). Its function is as follows. Nucleotidase with a broad substrate specificity as it can dephosphorylate various ribo- and deoxyribonucleoside 5'-monophosphates and ribonucleoside 3'-monophosphates with highest affinity to 3'-AMP. Also hydrolyzes polyphosphate (exopolyphosphatase activity) with the preference for short-chain-length substrates (P20-25). Might be involved in the regulation of dNTP and NTP pools, and in the turnover of 3'-mononucleotides produced by numerous intracellular RNases (T1, T2, and F) during the degradation of various RNAs. In Shigella boydii serotype 18 (strain CDC 3083-94 / BS512), this protein is 5'/3'-nucleotidase SurE.